The following is a 155-amino-acid chain: MNQAELQRHMEEVSLQFFQKEFRHQAVFNARLRTTGGRYLLKSHNIEMNPKYLENFGLAYFIGIMKHELCHYHLHLEKKGYQHRDQDFRELLKKVDAPRFCATIPREITMHEYTCKSCGKSFLRQRRFNVNRYRCGSCGGKLIQTDSKKIYTENP.

The region spanning 7 to 145 (QRHMEEVSLQ…GSCGGKLIQT (139 aa)) is the SprT-like domain. H67 provides a ligand contact to Zn(2+). E68 is an active-site residue. Zn(2+) is bound at residue H71.

It belongs to the SprT family. It depends on Zn(2+) as a cofactor.

Its subcellular location is the cytoplasm. In Listeria monocytogenes serovar 1/2a (strain ATCC BAA-679 / EGD-e), this protein is Protein SprT-like.